Consider the following 169-residue polypeptide: MLRSEKPVAVEDIVNIYKESPSIIITHYHGLTVSQVSSLRESLKSKEAGFKVVKNTLAKIAANQTGLNSIVNLFAGPTAIVYSKEPVEMAKLVVNFAKANDNLKIIGGIVDNHVLDEHSIKELSKLPTLNELRGKIVGLLQAPATKVVGVLQAPSSSMARVIQAHASKN.

The protein belongs to the universal ribosomal protein uL10 family. Part of the ribosomal stalk of the 50S ribosomal subunit. The N-terminus interacts with L11 and the large rRNA to form the base of the stalk. The C-terminus forms an elongated spine to which L12 dimers bind in a sequential fashion forming a multimeric L10(L12)X complex.

In terms of biological role, forms part of the ribosomal stalk, playing a central role in the interaction of the ribosome with GTP-bound translation factors. The protein is Large ribosomal subunit protein uL10 of Rickettsia africae (strain ESF-5).